Consider the following 362-residue polypeptide: 3-dehydroquinate synthase (362 aa).

NAD(+) is bound by residues 73–78 (DAEAGK), 107–111 (GAATD), 131–132 (TT), K144, K153, and 171–174 (TLQT). Positions 186, 249, and 265 each coordinate Zn(2+).

It belongs to the sugar phosphate cyclases superfamily. Dehydroquinate synthase family. Requires NAD(+) as cofactor. Co(2+) is required as a cofactor. It depends on Zn(2+) as a cofactor.

The protein localises to the cytoplasm. The catalysed reaction is 7-phospho-2-dehydro-3-deoxy-D-arabino-heptonate = 3-dehydroquinate + phosphate. The protein operates within metabolic intermediate biosynthesis; chorismate biosynthesis; chorismate from D-erythrose 4-phosphate and phosphoenolpyruvate: step 2/7. Catalyzes the conversion of 3-deoxy-D-arabino-heptulosonate 7-phosphate (DAHP) to dehydroquinate (DHQ). The polypeptide is 3-dehydroquinate synthase (Mycobacterium bovis (strain ATCC BAA-935 / AF2122/97)).